Consider the following 125-residue polypeptide: Fluoride-specific ion channel FluC (125 aa).

4 helical membrane-spanning segments follow: residues 2-22, 35-55, 68-88, and 98-118; these read WLSILAIFCGAGLGALLRTGF, LGTLISNMVGGYLIGIALAFF, LIITGFLGGLTTFSSFSAEVV, and WALGTALLHLVGSLVLTLLGI. 2 residues coordinate Na(+): G75 and T78.

This sequence belongs to the fluoride channel Fluc/FEX (TC 1.A.43) family.

It is found in the cell inner membrane. It carries out the reaction fluoride(in) = fluoride(out). Its activity is regulated as follows. Na(+) is not transported, but it plays an essential structural role and its presence is essential for fluoride channel function. In terms of biological role, fluoride-specific ion channel. Important for reducing fluoride concentration in the cell, thus reducing its toxicity. In Polynucleobacter asymbioticus (strain DSM 18221 / CIP 109841 / QLW-P1DMWA-1) (Polynucleobacter necessarius subsp. asymbioticus), this protein is Fluoride-specific ion channel FluC.